Here is a 252-residue protein sequence, read N- to C-terminus: Short-chain dehydrogenase anuI (252 aa).

NADP(+) is bound by residues L18, D65, N92, Y171, K175, and T206. Residue Y171 is the Proton acceptor of the active site. Y171 functions as the Proton donor in the catalytic mechanism. Residue K175 is the Lowers pKa of active site Tyr of the active site.

Belongs to the short-chain dehydrogenases/reductases (SDR) family.

Functionally, highly reducing polyketide synthase; part of the gene cluster that mediates the biosynthesis of annullatin D, an alkylated aromatic polyketide with a fused dihydrobenzofuran lactone ring system that exhibits potent agonistic activities toward the cannabinoid receptors. AnuI does not seem to play a role within the pathway. The annullatin backbone 2-hydroxymethyl-3-pentylphenol is assembled from one acetyl-CoA starter unit and 5 malonyl-CoA elongation units by cooperation of the highly reducing polyketide synthase anuA, the short-chain dehydrogenase anuB and the oxidoreductase anuC, before being hydroxylated at the C-5 alkyl chain by the cytochrome P450 monooxygenase anuE to form (8S)-annullatin E. The prenyltransferase anuH subsequently installs one isoprenyl group at the benzene ring to form (8S)-annullatin J. Enzymatic or nonenzymatic dihydro-benzofuran ring formation between the prenyl and the phenolic hydroxyl groups in (8S)-annullatin J results in two diastereomers (2S,9S)-annullatin H and compound 12. The intermediate (2S,9S)-annullatin H is then converted to (2S,9S)-annullatin D by the FAD-linked oxidoreductase anuG-catalyzed five-member lactone ring formation. The isomer 12 acts as a substrate for the short-chain dehydrogenase anuF and is oxidized to (2R)-annullatin F, which is subsequently acetylated by an acetyltransferase leading to (2R)-annullatin G formation. The remaining enzymes identified within the cluster, anuD, anuI and anuJ, seem not to be involved in annullatin biosynthesis. This Penicillium roqueforti (strain FM164) protein is Short-chain dehydrogenase anuI.